We begin with the raw amino-acid sequence, 704 residues long: E3 ubiquitin-protein ligase MBR1 (704 aa).

6 disordered regions span residues 1–20 (MNPMQGPRSIGGSSTEVNQV), 37–61 (NPADTGFPNNSTPSGRPTYASSSSH), 176–197 (SSLGSSVQAAGESSSGPASPFG), 245–354 (LSLA…GENQ), 381–403 (SNPSGIGMPAERLGPQWETPRSN), and 436–525 (SLFV…RHRR). A compositionally biased stretch (polar residues) spans 43 to 61 (FPNNSTPSGRPTYASSSSH). Composition is skewed to low complexity over residues 184–196 (AAGESSSGPASPF) and 245–255 (LSLATPSQSSP). 3 stretches are compositionally biased toward polar residues: residues 281-290 (FHSTRNTDTL), 300-329 (RQPQESVAFSVSHGGTSVRPTGSLQQNLPL), and 340-354 (RSSSITSGSNTGENQ). A compositionally biased stretch (pro residues) spans 452–467 (QPNPTWIPPQNAPPHN). Residues 485–505 (SPSASHGGPLPLLPAGPSVSS) show a composition bias toward low complexity. An RING-type; atypical zinc finger spans residues 656–697 (CCICQEEYVEGDNLGTLKCGHEFHKDCIKQWVMIKNLCPICK).

The protein belongs to the RING-type zinc finger family. As to quaternary structure, interacts with MED25 and UBC11.

The enzyme catalyses S-ubiquitinyl-[E2 ubiquitin-conjugating enzyme]-L-cysteine + [acceptor protein]-L-lysine = [E2 ubiquitin-conjugating enzyme]-L-cysteine + N(6)-ubiquitinyl-[acceptor protein]-L-lysine.. It functions in the pathway protein modification; protein ubiquitination. Its function is as follows. E3 ubiquitin-protein ligase that functions as a regulator of MED25 stability by targeting MED25 for degradation in a RING-H2-dependent way. Proteasome-dependent degradation of MED25 seems to activate its function as positive regulator of FLOWERING LOCUS T (FT) and is important to induce the expression of FT and consequently to promote flowering. This chain is E3 ubiquitin-protein ligase MBR1 (MBR1), found in Arabidopsis thaliana (Mouse-ear cress).